The primary structure comprises 1070 residues: MLGDGNEGMSTLPGLNQIQFEGFCRFIDRGLPEGLFKFPKIEDTDQEIEFQLFVETYQLLEPLINEKDAVYESLTYSAELYVSAGLIWKSSRDIQEQTIFVGNIPLMNSLGTSIVNGIYRIVINQILQSPGIYYRSELDPSGISVYTGTIISDWGGRLELEIDRKARIWARVSRKQKISILVLSSAMGSNLSEILENVCYPEIFVSFLNDKDKKKIGSKENAILEFYRQFACVGGDPVFSESLCKELQKKFFQQRCELGRIGRRNMNQKLNLDIPQNNTFLLPRDILTAADHLIGMKFGMGILDDINHLKNKRIRSVADLLQDQFGLALVRLENMVRGTICGAIRHKLIPTPQNLVTSTPLTTTYESFFGLHPLSQVLDQTNPLTQIVHGRKLSYLGPGGLTGRTASFRIRDIHPSHYGRICPIDTSEGINVGLIGSLAIHARIGSWGSIESPFYEISERSKRIRMLYLSPSRDEYYMVATGNSLALNRDIQEEQTVPARYRQEFLTIAWEQVHLRSIFPFQYFSIGASLIPFIEHNDANRALMSSNMQRQAVPLSQSEKCIVGTGLERQVALDSGVSAIAEHEGNIIYTNTDRIFLFGNGDTLSIPLTIYQRSNKNTCMHQKPQVRRGKCIKKGQILADGAATVDGELALGKNVLVAYMPWEGYNSEDAVLINERLVYEDIYTSFHIRKYEIQTHMTSYGSERITNKIPHLEAHLLRNLDKNGIVILGSWVETGDILVGKLTPQMAKESSYSPEDRLLRAILGIQVSTSKETCLKLPTGGRGRVIDVRWIQKKGGSSYNPETIRIYILQKREIKVGDKVAGRHGNKGIVSKILSRQDMPYLQDGRPVDMVFNPLGVPSRMNVGQIFECSLGLAGGMLERHYRITPFDERYEQEASRKLVFSELYEASKQTSNPWIFEPEYPGKSKIFDGRTGNSFKQPAIMGKPYILKLIHQVDDKIHGRSSGHYALVTQQPLRGRAKQGGQRVGEMEVWALEGFGVAHILQEMLTYKSDHIKTRQEVLGTTIIGGTIPKPTDAPESFRLLVRELRSLAMELNHFLVSEKNFRIHRKEA.

This sequence belongs to the RNA polymerase beta chain family. In plastids the minimal PEP RNA polymerase catalytic core is composed of four subunits: alpha, beta, beta', and beta''. When a (nuclear-encoded) sigma factor is associated with the core the holoenzyme is formed, which can initiate transcription.

The protein resides in the plastid. It localises to the chloroplast. The enzyme catalyses RNA(n) + a ribonucleoside 5'-triphosphate = RNA(n+1) + diphosphate. In terms of biological role, DNA-dependent RNA polymerase catalyzes the transcription of DNA into RNA using the four ribonucleoside triphosphates as substrates. This chain is DNA-directed RNA polymerase subunit beta, found in Glycine max (Soybean).